Consider the following 319-residue polypeptide: Methionyl-tRNA formyltransferase (319 aa).

Residue Ser113–Pro116 coordinates (6S)-5,6,7,8-tetrahydrofolate.

It belongs to the Fmt family.

The enzyme catalyses L-methionyl-tRNA(fMet) + (6R)-10-formyltetrahydrofolate = N-formyl-L-methionyl-tRNA(fMet) + (6S)-5,6,7,8-tetrahydrofolate + H(+). Attaches a formyl group to the free amino group of methionyl-tRNA(fMet). The formyl group appears to play a dual role in the initiator identity of N-formylmethionyl-tRNA by promoting its recognition by IF2 and preventing the misappropriation of this tRNA by the elongation apparatus. The polypeptide is Methionyl-tRNA formyltransferase (Hamiltonella defensa subsp. Acyrthosiphon pisum (strain 5AT)).